Here is a 531-residue protein sequence, read N- to C-terminus: Membrane protein insertase YidC (531 aa).

The next 4 helical transmembrane spans lie at 5–25 (ALIA…LFSP), 343–363 (GNYG…FYPL), 415–435 (LPML…MFSI), and 489–509 (PVVF…YWLV).

It belongs to the OXA1/ALB3/YidC family. Type 1 subfamily. Interacts with the Sec translocase complex via SecD. Specifically interacts with transmembrane segments of nascent integral membrane proteins during membrane integration.

The protein resides in the cell inner membrane. Required for the insertion and/or proper folding and/or complex formation of integral membrane proteins into the membrane. Involved in integration of membrane proteins that insert both dependently and independently of the Sec translocase complex, as well as at least some lipoproteins. Aids folding of multispanning membrane proteins. This chain is Membrane protein insertase YidC, found in Geobacter sulfurreducens (strain ATCC 51573 / DSM 12127 / PCA).